Reading from the N-terminus, the 414-residue chain is Gamma-glutamyl phosphate reductase (414 aa).

This sequence belongs to the gamma-glutamyl phosphate reductase family.

It is found in the cytoplasm. It carries out the reaction L-glutamate 5-semialdehyde + phosphate + NADP(+) = L-glutamyl 5-phosphate + NADPH + H(+). It functions in the pathway amino-acid biosynthesis; L-proline biosynthesis; L-glutamate 5-semialdehyde from L-glutamate: step 2/2. Its function is as follows. Catalyzes the NADPH-dependent reduction of L-glutamate 5-phosphate into L-glutamate 5-semialdehyde and phosphate. The product spontaneously undergoes cyclization to form 1-pyrroline-5-carboxylate. This is Gamma-glutamyl phosphate reductase from Geobacillus thermodenitrificans (strain NG80-2).